The following is a 176-amino-acid chain: Glyoxalase domain-containing protein RDO1 (176 aa).

Positions 53-172 (SLDHLVITCH…DNNLIELSSY (120 aa)) constitute a VOC domain. The active-site Proton donor/acceptor is glutamate 168.

Belongs to the glyoxalase I family.

Its pathway is secondary metabolite biosynthesis. Glyoxalase domain-containing protein; part of the gene cluster that mediates the biosynthesis of itaconic acid and 2-hydroxyparaconate. Cis-aconitate is secreted by the mitochondrial tricarboxylate transporter MTT1. In the cytosol cis-aconitate is converted into trans-aconitate via isomerization by the aconitate-delta-isomerase ADI1. Decarboxylation of trans-aconitate by the trans-aconitate decarboxylase TAD1 then leads then to the production of itaconic acid. The cytochrome P450 monooxygenase CYP3 further converts itaconate to 2-hydroxyparaconate via oxidation of the double bond, leading to a transient epoxide, which can subsequently be lactonized to produce 2-hydroxyparaconate. Secretion of itaconate and possibly 2-hydroxyparaconate into the medium is mediated by the major facilitator ITP1. The glyoxalase domain-containing protein RDO1 is not involved in the biosynthesis of itaconate and 2-hydroxyparaconate, however, it might play a role in the further conversion of 2-hydroxyparaconate to itatartarate. The protein is Glyoxalase domain-containing protein RDO1 of Mycosarcoma maydis (Corn smut fungus).